Consider the following 328-residue polypeptide: Probable G-protein coupled receptor 82 (328 aa).

The Extracellular portion of the chain corresponds to Met1–Ser11. 2 N-linked (GlcNAc...) asparagine glycosylation sites follow: Asn3 and Asn4. The helical transmembrane segment at Val12–Gly32 threads the bilayer. Topologically, residues Asn33 to Ala55 are cytoplasmic. Residues Asn56–Leu76 traverse the membrane as a helical segment. Topologically, residues Arg77–Asn92 are extracellular. A helical transmembrane segment spans residues Phe93–Ile115. Topologically, residues Ser116–Cys156 are cytoplasmic. Residues Ile157 to Val177 form a helical membrane-spanning segment. Topologically, residues Glu178–Arg197 are extracellular. The helical transmembrane segment at Pro198–Val218 threads the bilayer. Residues Thr219–Leu251 are Cytoplasmic-facing. The chain crosses the membrane as a helical span at residues Leu252–Phe272. Over Tyr273–Ser328 the chain is Extracellular.

Belongs to the G-protein coupled receptor 1 family.

Its subcellular location is the cell membrane. Its function is as follows. Orphan receptor. The sequence is that of Probable G-protein coupled receptor 82 (Gpr82) from Mus musculus (Mouse).